A 384-amino-acid chain; its full sequence is 5-amino-6-(D-ribitylamino)uracil--L-tyrosine 4-hydroxyphenyl transferase 2 (384 aa).

Residues 53–286 form the Radical SAM core domain; it reads VSYVVNRNIY…IAISRVILHT (234 aa). [4Fe-4S] cluster-binding residues include Cys67, Cys71, and Cys74.

Belongs to the radical SAM superfamily. CofH family. In terms of assembly, consists of two subunits, CofG and CofH. [4Fe-4S] cluster is required as a cofactor.

The catalysed reaction is 5-amino-6-(D-ribitylamino)uracil + L-tyrosine + S-adenosyl-L-methionine = 5-amino-5-(4-hydroxybenzyl)-6-(D-ribitylimino)-5,6-dihydrouracil + 2-iminoacetate + 5'-deoxyadenosine + L-methionine + H(+). Its pathway is cofactor biosynthesis; coenzyme F0 biosynthesis. In terms of biological role, catalyzes the radical-mediated synthesis of 5-amino-5-(4-hydroxybenzyl)-6-(D-ribitylimino)-5,6-dihydrouracil from 5-amino-6-(D-ribitylamino)uracil and L-tyrosine. The polypeptide is 5-amino-6-(D-ribitylamino)uracil--L-tyrosine 4-hydroxyphenyl transferase 2 (Methanosarcina mazei (strain ATCC BAA-159 / DSM 3647 / Goe1 / Go1 / JCM 11833 / OCM 88) (Methanosarcina frisia)).